We begin with the raw amino-acid sequence, 21 residues long: Brevinin-1OKb (21 aa).

K21 is modified (lysine amide).

Expressed by the skin glands.

It localises to the secreted. In terms of biological role, antimicrobial peptide. In Nidirana okinavana (Kampira Falls frog), this protein is Brevinin-1OKb.